We begin with the raw amino-acid sequence, 200 residues long: dTTP/UTP pyrophosphatase (200 aa).

Aspartate 72 acts as the Proton acceptor in catalysis.

It belongs to the Maf family. YhdE subfamily. It depends on a divalent metal cation as a cofactor.

The protein localises to the cytoplasm. The catalysed reaction is dTTP + H2O = dTMP + diphosphate + H(+). The enzyme catalyses UTP + H2O = UMP + diphosphate + H(+). In terms of biological role, nucleoside triphosphate pyrophosphatase that hydrolyzes dTTP and UTP. May have a dual role in cell division arrest and in preventing the incorporation of modified nucleotides into cellular nucleic acids. This Pseudomonas syringae pv. syringae (strain B728a) protein is dTTP/UTP pyrophosphatase.